The sequence spans 372 residues: Cytochrome b (372 aa).

The next 4 membrane-spanning stretches (helical) occupy residues 25-45 (FGSM…FLAV), 69-90 (WMMQ…YIHM), 105-125 (WLSG…GYVL), and 170-190 (FFAL…LHIM). His75 and His89 together coordinate heme b. Residues His174 and His188 each contribute to the heme b site. An a ubiquinone-binding site is contributed by His193. Transmembrane regions (helical) follow at residues 218 to 238 (YKDL…ISFL), 280 to 300 (LGGA…PFTH), 312 to 332 (FMQL…WTAT), and 339 to 358 (YTTI…MSNL).

It belongs to the cytochrome b family. As to quaternary structure, the cytochrome bc1 complex contains 3 respiratory subunits (MT-CYB, CYC1 and UQCRFS1), 2 core proteins (UQCRC1 and UQCRC2) and probably 6 low-molecular weight proteins. It depends on heme b as a cofactor.

It localises to the mitochondrion inner membrane. Component of the ubiquinol-cytochrome c reductase complex (complex III or cytochrome b-c1 complex) that is part of the mitochondrial respiratory chain. The b-c1 complex mediates electron transfer from ubiquinol to cytochrome c. Contributes to the generation of a proton gradient across the mitochondrial membrane that is then used for ATP synthesis. The protein is Cytochrome b (MT-CYB) of Sanzinia madagascariensis (Madagascar tree boa).